The chain runs to 423 residues: UDP-N-acetylglucosamine 1-carboxyvinyltransferase (423 aa).

A phosphoenolpyruvate-binding site is contributed by 22-23 (KN). Residue Arg-93 participates in UDP-N-acetyl-alpha-D-glucosamine binding. Residue Cys-117 is the Proton donor of the active site. Cys-117 is subject to 2-(S-cysteinyl)pyruvic acid O-phosphothioketal. UDP-N-acetyl-alpha-D-glucosamine-binding residues include Asp-305 and Ile-327.

Belongs to the EPSP synthase family. MurA subfamily.

The protein resides in the cytoplasm. The catalysed reaction is phosphoenolpyruvate + UDP-N-acetyl-alpha-D-glucosamine = UDP-N-acetyl-3-O-(1-carboxyvinyl)-alpha-D-glucosamine + phosphate. Its pathway is cell wall biogenesis; peptidoglycan biosynthesis. Its function is as follows. Cell wall formation. Adds enolpyruvyl to UDP-N-acetylglucosamine. This is UDP-N-acetylglucosamine 1-carboxyvinyltransferase from Acidithiobacillus ferrooxidans (strain ATCC 23270 / DSM 14882 / CIP 104768 / NCIMB 8455) (Ferrobacillus ferrooxidans (strain ATCC 23270)).